Reading from the N-terminus, the 60-residue chain is Large ribosomal subunit protein uL30 (60 aa).

The protein belongs to the universal ribosomal protein uL30 family. In terms of assembly, part of the 50S ribosomal subunit.

This chain is Large ribosomal subunit protein uL30, found in Cupriavidus necator (strain ATCC 17699 / DSM 428 / KCTC 22496 / NCIMB 10442 / H16 / Stanier 337) (Ralstonia eutropha).